Consider the following 125-residue polypeptide: Transposase C from transposon PsiTn554 (125 aa).

The protein is Transposase C from transposon PsiTn554 (tnpC) of Staphylococcus aureus.